Here is a 566-residue protein sequence, read N- to C-terminus: Solute carrier family 22 member 16 (566 aa).

Residues 20-40 (FASAFQTISCGIHYLASVFIA) traverse the membrane as a helical segment. Residues N52, N60, and N112 are each glycosylated (N-linked (GlcNAc...) asparagine). 5 consecutive transmembrane segments (helical) span residues 149 to 169 (LIQP…GDIA), 176 to 196 (PIIW…AFTF), 201 to 221 (FVIV…VVFV), 237 to 257 (MHVH…GFLV), and 261 to 281 (WIYQ…CWML). Residue N344 is glycosylated (N-linked (GlcNAc...) asparagine). 6 helical membrane-spanning segments follow: residues 351 to 371 (TITV…FALN), 381 to 401 (LNLF…CLGM), 408 to 428 (NTLA…MLIP), 436 to 456 (IAMS…IYLY), 468 to 488 (LAVG…PFCV), and 493 to 513 (VWIF…GILT).

It belongs to the major facilitator (TC 2.A.1) superfamily. Organic cation transporter (TC 2.A.1.19) family.

It localises to the membrane. In terms of biological role, high affinity carnitine transporter. This Xenopus laevis (African clawed frog) protein is Solute carrier family 22 member 16 (slc22a16).